The primary structure comprises 149 residues: D-aminoacyl-tRNA deacylase (149 aa).

The short motif at 137–138 is the Gly-cisPro motif, important for rejection of L-amino acids element; that stretch reads GP.

The protein belongs to the DTD family. As to quaternary structure, homodimer.

The protein resides in the cytoplasm. It carries out the reaction glycyl-tRNA(Ala) + H2O = tRNA(Ala) + glycine + H(+). The catalysed reaction is a D-aminoacyl-tRNA + H2O = a tRNA + a D-alpha-amino acid + H(+). Its function is as follows. An aminoacyl-tRNA editing enzyme that deacylates mischarged D-aminoacyl-tRNAs. Also deacylates mischarged glycyl-tRNA(Ala), protecting cells against glycine mischarging by AlaRS. Acts via tRNA-based rather than protein-based catalysis; rejects L-amino acids rather than detecting D-amino acids in the active site. By recycling D-aminoacyl-tRNA to D-amino acids and free tRNA molecules, this enzyme counteracts the toxicity associated with the formation of D-aminoacyl-tRNA entities in vivo and helps enforce protein L-homochirality. The polypeptide is D-aminoacyl-tRNA deacylase (Clostridioides difficile (strain 630) (Peptoclostridium difficile)).